We begin with the raw amino-acid sequence, 76 residues long: Conotoxin Cal5a L2 (76 aa).

A signal peptide spans 1-22 (MRFYIGLMAALMLTSILRTDSA). Residues 23 to 42 (SVGQTGTKSELALIERVIRQ) constitute a propeptide that is removed on maturation. Pro-50 is modified (4-hydroxyproline). 4-hydroxyproline; partial occurs at positions 58, 62, and 64.

This sequence belongs to the conotoxin T superfamily. Contains 2 disulfide bonds that can be either 'C1-C3, C2-C4' or 'C1-C4, C2-C3', since these disulfide connectivities have been observed for conotoxins with cysteine framework V (for examples, see AC P0DQQ7 and AC P81755). Expressed by the venom duct.

Its subcellular location is the secreted. Its function is as follows. Probable neurotoxin with unknown target. Possibly targets ion channels. The sequence is that of Conotoxin Cal5a L2 from Californiconus californicus (California cone).